A 306-amino-acid polypeptide reads, in one-letter code: Manganese transport system membrane protein MntB (306 aa).

Over 1-25 (MNQLVVAFPFWHWLVEPLQYEFLIR) the chain is Periplasmic. Residues 26–46 (AIWVSAFVGLVCAVLSCYITL) traverse the membrane as a helical segment. Residues 47–48 (KG) are Cytoplasmic-facing. A helical membrane pass occupies residues 49–69 (WSLMGDAISHAVVPGVVLAYA). Over 70-71 (LN) the chain is Periplasmic. A helical membrane pass occupies residues 72–92 (IPFAIGAFTFGFGATVAIGYV). Over 93-101 (KSKTRLKED) the chain is Cytoplasmic. The helical transmembrane segment at 102–122 (AVIGIVFTGFFALGLVLVTKI) threads the bilayer. Topologically, residues 123 to 141 (PSNVDLFHILFGNVLGISQ) are periplasmic. A helical membrane pass occupies residues 142-162 (QDIIQTLIAGSITLIVILLRR). The Cytoplasmic segment spans residues 163-179 (KDLLLFCFDPNHAKAIG). The helical transmembrane segment at 180–200 (LRTQVMYYTLLSVLALTIVAA) threads the bilayer. Topologically, residues 201-202 (LQ) are periplasmic. Residues 203–223 (TAGIILVISMLVTPGSIGYLL) traverse the membrane as a helical segment. Over 224-228 (SDRFD) the chain is Cytoplasmic. The helical transmembrane segment at 229-249 (HMLWYSVVSSVLSCVLGTYLS) threads the bilayer. At 250-255 (YHFDVS) the chain is on the periplasmic side. A helical membrane pass occupies residues 256–276 (TGGMIVVILTTLFVIAMIGAP). At 277 to 306 (KYGILAQEWRKRSGPNPEDDENQTVVVDQV) the chain is on the cytoplasmic side.

It belongs to the ABC-3 integral membrane protein family.

The protein localises to the cell membrane. In terms of biological role, part of an ATP-driven transport system for manganese. The chain is Manganese transport system membrane protein MntB (mntB) from Synechocystis sp. (strain ATCC 27184 / PCC 6803 / Kazusa).